Reading from the N-terminus, the 309-residue chain is Metaxin-3 (309 aa).

Residues Met-274–His-309 are disordered. 2 stretches are compositionally biased toward polar residues: residues Arg-280–Ser-290 and Asn-300–His-309.

Belongs to the metaxin family. Part of a large protein complex spanning both mitochondrial membranes termed the mitochondrial intermembrane space bridging (MIB) complex.

It localises to the mitochondrion. The protein resides in the mitochondrion outer membrane. Functionally, could function in transport of proteins into the mitochondrion. This chain is Metaxin-3 (mtx3), found in Xenopus laevis (African clawed frog).